Here is a 55-residue protein sequence, read N- to C-terminus: UPF0391 membrane protein RSp1666 (55 aa).

Helical transmembrane passes span 5 to 25 and 33 to 53; these read AVIF…GIAA and ILFM…LVAG.

This sequence belongs to the UPF0391 family.

Its subcellular location is the cell membrane. In Ralstonia nicotianae (strain ATCC BAA-1114 / GMI1000) (Ralstonia solanacearum), this protein is UPF0391 membrane protein RSp1666.